A 340-amino-acid polypeptide reads, in one-letter code: Fructoselysine 6-phosphate deglycase (340 aa).

2 SIS domains span residues 35–169 (IVEE…RLAP) and 201–331 (LGEL…PDER).

Homododecamer.

It carries out the reaction N(6)-(6-phospho-D-fructosyl)-L-lysine + H2O = D-glucose 6-phosphate + L-lysine. It functions in the pathway carbohydrate metabolism; fructoselysine degradation; D-glucose 6-phosphate and lysine from fructoselysine: step 2/2. Its activity is regulated as follows. Strongly inhibited by ZnCl(2). In terms of biological role, catalyzes the reversible conversion of fructoselysine 6-phosphate to glucose 6-phosphate and lysine. Functions in a fructoselysine degradation pathway that allows E.coli to grow on fructoselysine or psicoselysine. The sequence is that of Fructoselysine 6-phosphate deglycase from Escherichia coli (strain K12).